A 204-amino-acid polypeptide reads, in one-letter code: Outer-membrane lipoprotein LolB (204 aa).

The first 20 residues, 1–20 (MLRSRRLALLCLATPLWLAA), serve as a signal peptide directing secretion. Residue Cys21 is the site of N-palmitoyl cysteine attachment. Cys21 carries the S-diacylglycerol cysteine lipid modification. Residues 131–150 (GRAAPGTPSNVTRDANGRPD) are disordered.

The protein belongs to the LolB family. In terms of assembly, monomer.

It is found in the cell outer membrane. Functionally, plays a critical role in the incorporation of lipoproteins in the outer membrane after they are released by the LolA protein. This is Outer-membrane lipoprotein LolB from Cupriavidus metallidurans (strain ATCC 43123 / DSM 2839 / NBRC 102507 / CH34) (Ralstonia metallidurans).